We begin with the raw amino-acid sequence, 342 residues long: MEDLQLVLFILGAIAIVAVLVHGFWSIRRQQPKSLKDSPMGNFYKQQADKESPPKRVDADGFDADGIGAVRVRKVGESNPHETPPISPYLKQDVKAEPKPLFKHTTSTEIKQEPVPQPDFSLQSPLATEQQRGAKVSRQEPVLNGHVPPLGQSHAAMVAQKALEQEKHAQSTTVPTQTALFDEDAYLENTESEDEYAEETVDEGLDEPRDVLVLHVVAKEGQQLNGAELLPCFLTLNFKYGDMNIFHRHVDNAGNGKVLFSIANMLKPGVFDPDNMEQFSTQGVVFFMTLPCYGDALMNFSIMLNSARQLADDIDAVVLDGQRQPWGEFTKQDYLHRIRANA.

Residues 1-6 (MEDLQL) lie on the Periplasmic side of the membrane. Residues 7–27 (VLFILGAIAIVAVLVHGFWSI) traverse the membrane as a helical segment. Residues 28 to 342 (RRQQPKSLKD…DYLHRIRANA (315 aa)) are Cytoplasmic-facing. The interval 33-57 (KSLKDSPMGNFYKQQADKESPPKRV) is disordered. The span at 47 to 57 (QADKESPPKRV) shows a compositional bias: basic and acidic residues.

This sequence belongs to the ZipA family. In terms of assembly, interacts with FtsZ via their C-terminal domains.

Its subcellular location is the cell inner membrane. Its function is as follows. Essential cell division protein that stabilizes the FtsZ protofilaments by cross-linking them and that serves as a cytoplasmic membrane anchor for the Z ring. Also required for the recruitment to the septal ring of downstream cell division proteins. In Shewanella sp. (strain W3-18-1), this protein is Cell division protein ZipA.